The following is a 238-amino-acid chain: N-terminal acetyltransferase A complex catalytic subunit ARD1 (238 aa).

One can recognise an N-acetyltransferase domain in the interval 35–195; it reads YHILSWPEAS…DAYAMKKVLK (161 aa).

The protein belongs to the acetyltransferase family. ARD1 subfamily. As to quaternary structure, component of the N-terminal acetyltransferase A (NatA) complex, which is composed of ARD1, NAT1 and NAT5. Can self-associate.

Its subcellular location is the cytoplasm. It carries out the reaction N-terminal glycyl-[protein] + acetyl-CoA = N-terminal N(alpha)-acetylglycyl-[protein] + CoA + H(+). The enzyme catalyses N-terminal L-alanyl-[protein] + acetyl-CoA = N-terminal N(alpha)-acetyl-L-alanyl-[protein] + CoA + H(+). The catalysed reaction is N-terminal L-seryl-[protein] + acetyl-CoA = N-terminal N(alpha)-acetyl-L-seryl-[protein] + CoA + H(+). It catalyses the reaction N-terminal L-valyl-[protein] + acetyl-CoA = N-terminal N(alpha)-acetyl-L-valyl-[protein] + CoA + H(+). It carries out the reaction N-terminal L-cysteinyl-[protein] + acetyl-CoA = N-terminal N(alpha)-acetyl-L-cysteinyl-[protein] + CoA + H(+). The enzyme catalyses N-terminal L-threonyl-[protein] + acetyl-CoA = N-terminal N(alpha)-acetyl-L-threonyl-[protein] + CoA + H(+). In terms of biological role, catalytic component of the NatA N-terminal acetyltransferase, which catalyzes acetylation of proteins beginning with Met-Ser, Met-Gly and Met-Ala. N-acetylation plays a role in normal eukaryotic translation and processing, protect against proteolytic degradation and protein turnover. The sequence is that of N-terminal acetyltransferase A complex catalytic subunit ARD1 (ARD1) from Saccharomyces cerevisiae (strain ATCC 204508 / S288c) (Baker's yeast).